Here is a 493-residue protein sequence, read N- to C-terminus: Endolysin A (493 aa).

The protein belongs to the L5likevirus endolysin A protein family.

Endolysin that degrades host peptidoglycans and participates with the holin protein in the sequential events which lead to the programmed host cell lysis releasing the mature viral particles. Once the holin has permeabilized the host cell membrane, the endolysin can reach the periplasm and break down the peptidoglycan layer. The polypeptide is Endolysin A (10) (Mycobacterium phage D29 (Mycobacteriophage D29)).